Here is a 94-residue protein sequence, read N- to C-terminus: C-C motif chemokine 26 (94 aa).

The first 23 residues, 1-23, serve as a signal peptide directing secretion; that stretch reads MKSFPVAFLVLLIFILSVHRGVT. 2 disulfide bridges follow: Cys-33–Cys-57 and Cys-34–Cys-73.

The protein belongs to the intercrine beta (chemokine CC) family. As to quaternary structure, monomer.

The protein localises to the secreted. Chemoattractant for eosinophils and basophils. Acts as a ligand for C-C chemokine receptor CCR3 which triggers Ca(2+) mobilization in eosinophils. Also acts as a ligand for CX3C chemokine receptor CX3CR1, inducing cell chemotaxis. This is C-C motif chemokine 26 from Canis lupus familiaris (Dog).